The primary structure comprises 166 residues: KH homology domain-containing protein 1A (166 aa).

In terms of domain architecture, KH; atypical spans 19-78; sequence PLVFDMEEDKEDYIFGPHDEYLHTLEVHSNTLIQLERWFTPTGQTRVTVVGPLKARLWVM.

It belongs to the KHDC1 family.

Its subcellular location is the cytoplasm. Its function is as follows. Has pro-apoptotic activity. This chain is KH homology domain-containing protein 1A (Khdc1a), found in Mus musculus (Mouse).